We begin with the raw amino-acid sequence, 429 residues long: Enolase (429 aa).

Residue Q162 participates in (2R)-2-phosphoglycerate binding. Catalysis depends on E204, which acts as the Proton donor. D241, E283, and D310 together coordinate Mg(2+). The (2R)-2-phosphoglycerate site is built by K335, R364, S365, and K386. The active-site Proton acceptor is the K335.

It belongs to the enolase family. Mg(2+) serves as cofactor.

The protein localises to the cytoplasm. It is found in the secreted. The protein resides in the cell surface. The catalysed reaction is (2R)-2-phosphoglycerate = phosphoenolpyruvate + H2O. Its pathway is carbohydrate degradation; glycolysis; pyruvate from D-glyceraldehyde 3-phosphate: step 4/5. Functionally, catalyzes the reversible conversion of 2-phosphoglycerate (2-PG) into phosphoenolpyruvate (PEP). It is essential for the degradation of carbohydrates via glycolysis. This chain is Enolase, found in Mycobacterium bovis (strain BCG / Pasteur 1173P2).